The sequence spans 420 residues: Glucose-1-phosphate adenylyltransferase (420 aa).

Residues Y107, G173, E188–K189, and S206 each bind alpha-D-glucose 1-phosphate.

The protein belongs to the bacterial/plant glucose-1-phosphate adenylyltransferase family. Homotetramer.

It carries out the reaction alpha-D-glucose 1-phosphate + ATP + H(+) = ADP-alpha-D-glucose + diphosphate. It functions in the pathway glycan biosynthesis; glycogen biosynthesis. Functionally, involved in the biosynthesis of ADP-glucose, a building block required for the elongation reactions to produce glycogen. Catalyzes the reaction between ATP and alpha-D-glucose 1-phosphate (G1P) to produce pyrophosphate and ADP-Glc. The polypeptide is Glucose-1-phosphate adenylyltransferase (Shewanella sp. (strain MR-4)).